We begin with the raw amino-acid sequence, 239 residues long: MICOS complex subunit mic25a (239 aa).

G2 carries the N-myristoyl glycine lipid modification. Disordered stretches follow at residues 27-88 (VKLS…KKRY) and 113-133 (DISR…ERAK). Positions 50–78 (NKENQGHQTRTPSTSDAQAPKTQAKTTFP) are enriched in polar residues. Residues 79-88 (DSKEELKKRY) show a composition bias toward basic and acidic residues. The stretch at 79-166 (DSKEELKKRY…ITQLEKKNEE (88 aa)) forms a coiled coil. Positions 192 to 234 (EPVCLNLQAQILNCYRENREQTLQCSDLAKEYMQCINAAKKNL) constitute a CHCH domain. 2 consecutive short sequence motifs (cx9C motif) follow at residues 195–205 (CLNLQAQILNC) and 216–226 (CSDLAKEYMQC). Disulfide bonds link C195/C226 and C205/C216.

This sequence belongs to the MICOS complex subunit Mic19 family. Metazoan Mic25 subfamily. As to quaternary structure, component of the mitochondrial contact site and cristae organizing system (MICOS) complex (also known as MINOS or MitOS complex).

The protein resides in the mitochondrion inner membrane. Functionally, component of the MICOS complex, a large protein complex of the mitochondrial inner membrane that plays crucial roles in the maintenance of crista junctions, inner membrane architecture, and formation of contact sites to the outer membrane. In Danio rerio (Zebrafish), this protein is MICOS complex subunit mic25a (chchd6a).